A 355-amino-acid chain; its full sequence is Zinc finger protein CONSTANS-LIKE 5 (355 aa).

Residues Cys-22, Cys-25, Cys-45, His-50, Cys-61, Cys-64, Cys-84, and His-89 each contribute to the Zn(2+) site. A B box-type 1; atypical zinc finger spans residues 22-60; it reads CDACKSVTAAVFCRVDSAFLCIACDTRIHSFTRHERVWV. A B box-type 2; atypical zinc finger spans residues 61-103; that stretch reads CEVCEQAPAAVTCKADAAALCVSCDADIHSANPLASRHERVPV. The region spanning 285–327 is the CCT domain; the sequence is REARVLRYREKRKNRKFEKTIRYASRKAYAESRPRIKGRFAKR.

It belongs to the CONSTANS family.

The protein localises to the nucleus. This Arabidopsis thaliana (Mouse-ear cress) protein is Zinc finger protein CONSTANS-LIKE 5 (COL5).